The sequence spans 292 residues: Aquaporin-3 (292 aa).

Over 1–24 the chain is Cytoplasmic; sequence MGRQKELVSRCGEMLHIRYRLLRQ. A helical transmembrane segment spans residues 25 to 42; that stretch reads ALAECLGTLILVMFGCGS. Over 43–56 the chain is Extracellular; that stretch reads VAQVVLSRGTHGGF. Residues 57 to 74 traverse the membrane as a helical segment; it reads LTINLAFGFAVTLGILIA. The Cytoplasmic portion of the chain corresponds to 75-78; that stretch reads GQVS. An intramembrane region (discontinuously helical) is located at residues 79–92; that stretch reads GAHLNPAVTFAMCF. The NPA 1 motif lies at 83–85; the sequence is NPA. The Cytoplasmic portion of the chain corresponds to 93–100; the sequence is LAREPWIK. The chain crosses the membrane as a helical span at residues 101–121; that stretch reads LPIYTLAQTLGAFLGAGIVFG. The Extracellular segment spans residues 122–159; the sequence is LYYDAIWHFADNQLFVSGPNGTAGIFATYPSGHLDMIN. Asn-141 is a glycosylation site (N-linked (GlcNAc...) asparagine). A helical transmembrane segment spans residues 160 to 177; it reads GFFDQFIGTASLIVCVLA. The Cytoplasmic segment spans residues 178-189; the sequence is IVDPYNNPVPRG. Residues 190 to 206 form a helical membrane-spanning segment; sequence LEAFTVGLVVLVIGTSM. The Extracellular portion of the chain corresponds to 207-210; sequence GFNS. An intramembrane region (discontinuously helical) is located at residues 211–224; it reads GYAVNPARDFGPRL. Residues 215 to 217 carry the NPA 2 motif; that stretch reads NPA. The Extracellular portion of the chain corresponds to 225–242; the sequence is FTALAGWGSAVFTTGQHW. The helical transmembrane segment at 243–264 threads the bilayer; sequence WWVPIVSPLLGSIAGVFVYQLM. Over 265–292 the chain is Cytoplasmic; the sequence is IGCHLEQPPPSNEEENVKLAHVKHKEQI.

This sequence belongs to the MIP/aquaporin (TC 1.A.8) family. In terms of assembly, homotetramer; each monomer provides an independent glycerol/water pore. Could also exist in other oligomeric states. As to expression, widely expressed in epithelial cells of kidney (collecting ducts) and airways, in keratinocytes, immature dendritic cells and erythrocytes. Isoform 2 is not detectable in erythrocytes at the protein level.

The protein resides in the cell membrane. Its subcellular location is the basolateral cell membrane. It carries out the reaction glycerol(in) = glycerol(out). The enzyme catalyses H2O(in) = H2O(out). It catalyses the reaction H2O2(out) = H2O2(in). The catalysed reaction is urea(in) = urea(out). With respect to regulation, glycerol transport is regulated by pH, with the porin being permeable to glycerol at pH 7.4 but not at pH 5.5. Water permeability, however, is not influenced by pH. Aquaglyceroporins form homotetrameric transmembrane channels, with each monomer independently mediating glycerol and water transport across the plasma membrane along their osmotic gradient. Could also be permeable to urea. Also participates in cell permeability to H2O2 and H2O2-mediated signaling. In skin, transports glycerol to the epidermis and stratum corneum, where it maintains hydration, elasticity, and supports lipid biosynthesis for barrier repair. In kidney, contributes to the reabsorption of water, helping the body maintain proper fluid balance. The protein is Aquaporin-3 of Homo sapiens (Human).